Reading from the N-terminus, the 821-residue chain is Lysosomal beta glucosidase (821 aa).

The N-terminal stretch at 1–24 (MKTIKSLFLLSLLIVNLLISSTYG) is a signal peptide. Residues 25-69 (SSIRVSIVGGEEAEVIEKPRTFGNKRELKLEYSQIYPKKQLNQEN) constitute a propeptide that is removed on maturation. 3 N-linked (GlcNAc...) asparagine glycosylation sites follow: N113, N146, and N266. The active site involves D363. N-linked (GlcNAc...) asparagine glycosylation is found at N535, N555, N703, and N721.

The protein belongs to the glycosyl hydrolase 3 family. Post-translationally, glycosylated. The polyoligosaccharides are of the high-mannose type and are highly substituted with both phosphate and sulfate moieties.

Its subcellular location is the lysosome. The catalysed reaction is Hydrolysis of terminal, non-reducing beta-D-glucosyl residues with release of beta-D-glucose.. The sequence is that of Lysosomal beta glucosidase (gluA) from Dictyostelium discoideum (Social amoeba).